The sequence spans 291 residues: 3-methylcatechol 2,3-dioxygenase (291 aa).

2 consecutive VOC domains span residues 5-119 (RLGY…IYYG) and 143-264 (GLGH…YGWG). Fe cation contacts are provided by H146, H210, and E260.

The protein belongs to the extradiol ring-cleavage dioxygenase family. Homooctamer. It depends on Fe(2+) as a cofactor.

The catalysed reaction is 3-methylcatechol + O2 = 2-hydroxy-6-oxo-2,4-heptadienoate + H(+). It participates in xenobiotic degradation; toluene degradation. This Pseudomonas putida (strain ATCC 700007 / DSM 6899 / JCM 31910 / BCRC 17059 / LMG 24140 / F1) protein is 3-methylcatechol 2,3-dioxygenase (todE).